We begin with the raw amino-acid sequence, 637 residues long: Threonine--tRNA ligase (637 aa).

One can recognise a TGS domain in the interval 1–61; it reads MPNVKLPDGN…KEDCSLIIVT (61 aa). A catalytic region spans residues 242-533; sequence DHRKLGKALD…LIEHYAGKLP (292 aa). Zn(2+)-binding residues include Cys333, His384, and His510.

The protein belongs to the class-II aminoacyl-tRNA synthetase family. Homodimer. It depends on Zn(2+) as a cofactor.

It localises to the cytoplasm. The catalysed reaction is tRNA(Thr) + L-threonine + ATP = L-threonyl-tRNA(Thr) + AMP + diphosphate + H(+). Functionally, catalyzes the attachment of threonine to tRNA(Thr) in a two-step reaction: L-threonine is first activated by ATP to form Thr-AMP and then transferred to the acceptor end of tRNA(Thr). Also edits incorrectly charged L-seryl-tRNA(Thr). The sequence is that of Threonine--tRNA ligase from Legionella pneumophila (strain Paris).